Reading from the N-terminus, the 257-residue chain is TLC domain-containing protein 3A (257 aa).

The next 7 membrane-spanning stretches (helical) occupy residues 1 to 21 (MLLTLASGALFFPGLFALSIW), 42 to 62 (LVSSVQAVLATWAGLTVIISC), 71 to 91 (WLATEYVWFLIPYMIYDFYAM), 114 to 134 (LIENRLMVTHHTVILLFLVPI), 142 to 162 (LGDFFVGCIFTAELSTPFVSL), 181 to 201 (GILTVTTFLFCRILLFPFMYW), and 220 to 240 (LHCNMANAVLISPQLYWFSLL). In terms of domain architecture, TLC spans 33-249 (DDCLTVGTRL…LCKKAARLFD (217 aa)).

In terms of assembly, interacts with GGT7 isoform 3 and SLC3A2.

The protein resides in the cell membrane. The polypeptide is TLC domain-containing protein 3A (Tlcd3a) (Mus musculus (Mouse)).